A 2353-amino-acid polypeptide reads, in one-letter code: C2 domain-containing protein 3 (2353 aa).

A disordered region spans residues 1-27 (MKQRKGQGSGGSRGRKKRGLSDISPST). At serine 466 the chain carries Phosphoserine. Disordered regions lie at residues 488-508 (KVLESSDHKLKKRSAGKRNRN) and 549-568 (GVPPDSPQMTPGKKSYAGPP). Basic residues predominate over residues 496-507 (KLKKRSAGKRNR). The 158-residue stretch at 521–678 (DAQTMTLSVD…IQSELLSFSD (158 aa)) folds into the C2 1 domain. Residue serine 728 is modified to Phosphoserine. C2 domains lie at 787-919 (SHNL…SRLL), 985-1147 (QPTA…HRED), 1171-1339 (SSGL…TGWY), and 1403-1533 (EPAT…TLTV). The tract at residues 1569 to 1591 (HELDSMDCSSHSESEQLPRRNDE) is disordered. The C2 6 domain maps to 1617-1745 (TTAEVRLTQE…SGFQFVCGWY (129 aa)). The disordered stretch occupies residues 1822–1846 (SKELDFSSPGRSDTTRSQASRHEEH). Residues 1830–1839 (PGRSDTTRSQ) show a composition bias toward polar residues. Phosphoserine is present on serine 1891. Disordered stretches follow at residues 1972 to 2032 (ALSS…NGGR), 2084 to 2118 (TSPWSSVISDTSEVISPQPDEVQREGPSCPSPGPF), 2130 to 2269 (LSSP…QSLL), and 2301 to 2334 (PAATTDQDKSEATRGALSQRPCRPRPNSLPLNLP). The segment covering 2007–2016 (PLVRAPDKGT) has biased composition (basic and acidic residues). The segment covering 2084 to 2098 (TSPWSSVISDTSEVI) has biased composition (polar residues). A phosphoserine mark is found at serine 2114 and serine 2132. Polar residues predominate over residues 2181 to 2198 (SGAQQSSTFVGWSSPQTD). Over residues 2236–2253 (SRRENHKGPPIDSSDIRQ) the composition is skewed to basic and acidic residues. The segment covering 2254 to 2267 (RQVTTGSETSTKQS) has biased composition (polar residues).

Interacts with IFT88, BBS4 and PCM1. Interacts with OFD1; OFD1 may act as a negative regulator of C2CD3. Associates with the BBSome complex.

Its subcellular location is the cytoplasm. It is found in the cytoskeleton. The protein resides in the cilium basal body. It localises to the microtubule organizing center. The protein localises to the centrosome. Its subcellular location is the centriole. Component of the centrioles that acts as a positive regulator of centriole elongation. Promotes assembly of centriolar distal appendage, a structure at the distal end of the mother centriole that acts as an anchor of the cilium, and is required for recruitment of centriolar distal appendages proteins CEP83, SCLT1, CEP89, FBF1 and CEP164. Not required for centriolar satellite integrity or RAB8 activation. Required for primary cilium formation. Required for sonic hedgehog/SHH signaling and for proteolytic processing of GLI3. In Homo sapiens (Human), this protein is C2 domain-containing protein 3 (C2CD3).